The chain runs to 138 residues: Sec-independent protein translocase protein TatB (138 aa).

Residues 2–18 (SFGEIIVILVVAILVLG) form a helical membrane-spanning segment. Residues 109-138 (NNLSGQNLNTEEKPNLSKLETQDKNGKINV) form a disordered region. Over residues 118–138 (TEEKPNLSKLETQDKNGKINV) the composition is skewed to basic and acidic residues.

Belongs to the TatB family. The Tat system comprises two distinct complexes: a TatABC complex, containing multiple copies of TatA, TatB and TatC subunits, and a separate TatA complex, containing only TatA subunits. Substrates initially bind to the TatABC complex, which probably triggers association of the separate TatA complex to form the active translocon.

The protein localises to the cell inner membrane. Functionally, part of the twin-arginine translocation (Tat) system that transports large folded proteins containing a characteristic twin-arginine motif in their signal peptide across membranes. Together with TatC, TatB is part of a receptor directly interacting with Tat signal peptides. TatB may form an oligomeric binding site that transiently accommodates folded Tat precursor proteins before their translocation. The sequence is that of Sec-independent protein translocase protein TatB from Campylobacter jejuni subsp. jejuni serotype O:2 (strain ATCC 700819 / NCTC 11168).